We begin with the raw amino-acid sequence, 555 residues long: Polypyrimidine tract-binding protein 1 (555 aa).

Methionine 1 carries the post-translational modification N-acetylmethionine. Position 16 is a phosphoserine (serine 16). RRM domains lie at 58-142 (RVIH…SSPN), 183-259 (LRII…FSKL), and 361-412 (SVLL…SQAQ). Lysine 64 is covalently cross-linked (Glycyl lysine isopeptide (Lys-Gly) (interchain with G-Cter in SUMO2)). Position 126 is a phosphotyrosine (tyrosine 126). Threonine 137 carries the post-translational modification Phosphothreonine. Phosphoserine is present on serine 140. Lysine 217 participates in a covalent cross-link: Glycyl lysine isopeptide (Lys-Gly) (interchain with G-Cter in SUMO2). A disordered region spans residues 435–457 (HQSVQLPREGQEDQGLTKDYGSS). The residue at position 457 (serine 457) is a Phosphoserine. Residues 478 to 553 (ATLHLSNIPP…HHLRVSFSKS (76 aa)) enclose the RRM 4 domain.

In terms of assembly, monomer. Part of a ternary complex containing KHSRP, PTBP1, PTBP2 and HNRPH1. Interacts with SFPQ. Interacts with RAVER1. Interacts with IVNS1ABP (via BACK domain); the interaction is direct. Expressed in myoblast; expression gradually decreases during muscle cell differentiation (at protein level).

It localises to the nucleus. Plays a role in pre-mRNA splicing and in the regulation of alternative splicing events. Activates exon skipping of its own pre-mRNA during muscle cell differentiation. Binds to the polypyrimidine tract of introns. May promote RNA looping when bound to two separate polypyrimidine tracts in the same pre-mRNA. May promote the binding of U2 snRNP to pre-mRNA. Cooperates with RAVER1 to modulate switching between mutually exclusive exons during maturation of the TPM1 pre-mRNA. Represses the splicing of MAPT/Tau exon 10. Binds to polypyrimidine-rich controlling element (PCE) of CFTR and promotes exon skipping of CFTR exon 9, thereby antagonizing TIA1 and its role in exon inclusion of CFTR exon 9. Plays a role in the splicing of pyruvate kinase PKM by binding repressively to a polypyrimidine tract flanking PKM exon 9, inhibiting exon 9 inclusion and resulting in exon 10 inclusion and production of the PKM M2 isoform. This is Polypyrimidine tract-binding protein 1 (Ptbp1) from Mus musculus (Mouse).